Here is a 166-residue protein sequence, read N- to C-terminus: MPIIYYVIFAILYYLPALVANGSAPFVKNGTPIDFRKNFVDGRRLLGDGKTFEGLLVAVTFGTTVGIILAKFLGIYWIYVSFIESLLAMLGDMVGAFIKRRLGLARGARAIGLDQLDFILGATLALIISKISLNIYEFLSIVVIAFVLHILTNNVAYRLKIKSVPW.

A run of 5 helical transmembrane segments spans residues 1-21, 55-75, 78-98, 110-130, and 131-151; these read MPII…LVAN, LLVA…FLGI, IYVS…GAFI, AIGL…IISK, and ISLN…LHIL.

The protein belongs to the CDP-archaeol synthase family. Mg(2+) serves as cofactor.

The protein localises to the cell membrane. It catalyses the reaction 2,3-bis-O-(geranylgeranyl)-sn-glycerol 1-phosphate + CTP + H(+) = CDP-2,3-bis-O-(geranylgeranyl)-sn-glycerol + diphosphate. It participates in membrane lipid metabolism; glycerophospholipid metabolism. Functionally, catalyzes the formation of CDP-2,3-bis-(O-geranylgeranyl)-sn-glycerol (CDP-archaeol) from 2,3-bis-(O-geranylgeranyl)-sn-glycerol 1-phosphate (DGGGP) and CTP. This reaction is the third ether-bond-formation step in the biosynthesis of archaeal membrane lipids. The protein is CDP-archaeol synthase of Sulfurisphaera tokodaii (strain DSM 16993 / JCM 10545 / NBRC 100140 / 7) (Sulfolobus tokodaii).